A 1375-amino-acid chain; its full sequence is DNA-directed RNA polymerase subunit beta (1375 aa).

It belongs to the RNA polymerase beta chain family. As to quaternary structure, the RNAP catalytic core consists of 2 alpha, 1 beta, 1 beta' and 1 omega subunit. When a sigma factor is associated with the core the holoenzyme is formed, which can initiate transcription.

The catalysed reaction is RNA(n) + a ribonucleoside 5'-triphosphate = RNA(n+1) + diphosphate. In terms of biological role, DNA-dependent RNA polymerase catalyzes the transcription of DNA into RNA using the four ribonucleoside triphosphates as substrates. The polypeptide is DNA-directed RNA polymerase subunit beta (Methylibium petroleiphilum (strain ATCC BAA-1232 / LMG 22953 / PM1)).